The sequence spans 309 residues: Pantothenate synthetase (309 aa).

At Thr2 the chain carries N-acetylthreonine. 40-47 (MGALHEGH) provides a ligand contact to ATP. The active-site Proton donor is the His47. Gln72 lines the (R)-pantoate pocket. Residue Gln72 coordinates beta-alanine. 3 residues coordinate Mg(2+): Asp88, Asp89, and Gln92. 158 to 161 (GEKD) provides a ligand contact to ATP. Residue Gln164 participates in (R)-pantoate binding. Residues Val187 and 195–198 (MSSR) each bind ATP.

This sequence belongs to the pantothenate synthetase family.

The protein localises to the cytoplasm. The catalysed reaction is (R)-pantoate + beta-alanine + ATP = (R)-pantothenate + AMP + diphosphate + H(+). It functions in the pathway cofactor biosynthesis; (R)-pantothenate biosynthesis; (R)-pantothenate from (R)-pantoate and beta-alanine: step 1/1. With respect to regulation, pantothenate exhibits uncompetitive inhibition toward both D-pantoate and ATP, and non-competitive inhibition toward beta-alanine. AMPCPP exhibits competitive inhibition toward ATP, uncompetitive inhibition toward beta-alanine, and non-competitive inhibition toward D-pantoate. The enzyme is most active in the presence of magnesium or manganese. Other divalent cations (cobalt, nickel, zinc) are less effective. Catalyzes the condensation of pantoate with beta-alanine in an ATP-dependent reaction via a pantoyl-adenylate intermediate. In Mycobacterium tuberculosis (strain ATCC 25618 / H37Rv), this protein is Pantothenate synthetase (panC).